A 127-amino-acid chain; its full sequence is Fluoride-specific ion channel FluC (127 aa).

A run of 3 helical transmembrane segments spans residues T37–L57, L68–V88, and L102–A122. Na(+) contacts are provided by G76 and T79.

It belongs to the fluoride channel Fluc/FEX (TC 1.A.43) family.

The protein resides in the cell inner membrane. It carries out the reaction fluoride(in) = fluoride(out). With respect to regulation, na(+) is not transported, but it plays an essential structural role and its presence is essential for fluoride channel function. Its function is as follows. Fluoride-specific ion channel. Important for reducing fluoride concentration in the cell, thus reducing its toxicity. The protein is Fluoride-specific ion channel FluC of Hyphomonas neptunium (strain ATCC 15444).